The sequence spans 563 residues: MTTINYNENINNNNNTLESFGIEEWLINNLKEQSIINLFPVQQEIVPFINRTEGHDICVCAPTGSGKTLAYAIPLVQKIVKRVVRRVRVAVIVPTHDLVIQVEKTFQSIIKGTDLVVLSLGVKPFHIEQKLLIKNHSYGEHALYESLVDIIVSTPGRIVDHINETLGFTLKYLNYLVIDEADRLLRQSFQDWLEIVIDSTNQHSDLNQQQEEQLIKYNSKGDIELFEKSISLKDNNNQMNHLCWSEFKLVKLLLSATMTYNPSKISLLQLNAPLFFTTSKTKEIKYSMPSTLKECYIISNGDQKPLVLLNIIYESLLKNNANGENKKKIICFTKSVDITHRLNTLLKLIGQVDKLKFTCEEYSSSLSTVERADLLSRFKLNQIDILICSDIMSRGMDIQDIDVVINYNTPPNITLYVHRVGRTARAGNFGVSYTIVDKSEIKYYISMMKKAERSQTLHCLKWKPNVYEKFQSSYKLGLNQMRLIYSKRKINDIGDNGDDNNDNNNEDGNEIDGSVENIENNNNNNNNNNKNNNNNNFEKDYEVKLKHSLLEISKKKAKINFNI.

Positions 15–43 match the Q motif motif; the sequence is NTLESFGIEEWLINNLKEQSIINLFPVQQ. One can recognise a Helicase ATP-binding domain in the interval 48–276; it reads FINRTEGHDI…LLQLNAPLFF (229 aa). Residue 61–68 participates in ATP binding; the sequence is APTGSGKT. The DEAD box motif lies at 179-182; the sequence is DEAD. Positions 308-482 constitute a Helicase C-terminal domain; the sequence is LLNIIYESLL…SYKLGLNQMR (175 aa). The disordered stretch occupies residues 493–537; it reads IGDNGDDNNDNNNEDGNEIDGSVENIENNNNNNNNNNKNNNNNNF. Residues 495-510 show a composition bias toward acidic residues; sequence DNGDDNNDNNNEDGNE. Over residues 520 to 536 the composition is skewed to low complexity; the sequence is NNNNNNNNNNKNNNNNN.

Belongs to the DEAD box helicase family. DDX51/DBP6 subfamily.

Its subcellular location is the nucleus. The protein localises to the nucleolus. It catalyses the reaction ATP + H2O = ADP + phosphate + H(+). Probable ATP-binding RNA helicase which may be involved in ribosome biogenesis. In Dictyostelium discoideum (Social amoeba), this protein is Probable ATP-dependent RNA helicase ddx51 (ddx51).